Consider the following 169-residue polypeptide: ATP synthase subunit b (169 aa).

Residues 12 to 32 (PSVGLIFWKTVAFLIFLYILY) traverse the membrane as a helical segment. Residues 69-107 (AENEEARREAEQKAQQILREARDSAEELREEEKAKTRRE) are disordered. The segment covering 87–107 (REARDSAEELREEEKAKTRRE) has biased composition (basic and acidic residues).

This sequence belongs to the ATPase B chain family. As to quaternary structure, F-type ATPases have 2 components, F(1) - the catalytic core - and F(0) - the membrane proton channel. F(1) has five subunits: alpha(3), beta(3), gamma(1), delta(1), epsilon(1). F(0) has three main subunits: a(1), b(2) and c(10-14). The alpha and beta chains form an alternating ring which encloses part of the gamma chain. F(1) is attached to F(0) by a central stalk formed by the gamma and epsilon chains, while a peripheral stalk is formed by the delta and b chains.

It is found in the cell inner membrane. Its function is as follows. F(1)F(0) ATP synthase produces ATP from ADP in the presence of a proton or sodium gradient. F-type ATPases consist of two structural domains, F(1) containing the extramembraneous catalytic core and F(0) containing the membrane proton channel, linked together by a central stalk and a peripheral stalk. During catalysis, ATP synthesis in the catalytic domain of F(1) is coupled via a rotary mechanism of the central stalk subunits to proton translocation. In terms of biological role, component of the F(0) channel, it forms part of the peripheral stalk, linking F(1) to F(0). The sequence is that of ATP synthase subunit b from Salinibacter ruber (strain DSM 13855 / M31).